Consider the following 205-residue polypeptide: Probable nicotinate-nucleotide adenylyltransferase (205 aa).

Belongs to the NadD family.

The catalysed reaction is nicotinate beta-D-ribonucleotide + ATP + H(+) = deamido-NAD(+) + diphosphate. The protein operates within cofactor biosynthesis; NAD(+) biosynthesis; deamido-NAD(+) from nicotinate D-ribonucleotide: step 1/1. Catalyzes the reversible adenylation of nicotinate mononucleotide (NaMN) to nicotinic acid adenine dinucleotide (NaAD). The sequence is that of Probable nicotinate-nucleotide adenylyltransferase from Nocardioides sp. (strain ATCC BAA-499 / JS614).